Consider the following 117-residue polypeptide: Large ribosomal subunit protein uL18 (117 aa).

It belongs to the universal ribosomal protein uL18 family. As to quaternary structure, part of the 50S ribosomal subunit; part of the 5S rRNA/L5/L18/L25 subcomplex. Contacts the 5S and 23S rRNAs.

In terms of biological role, this is one of the proteins that bind and probably mediate the attachment of the 5S RNA into the large ribosomal subunit, where it forms part of the central protuberance. In Alkalilimnicola ehrlichii (strain ATCC BAA-1101 / DSM 17681 / MLHE-1), this protein is Large ribosomal subunit protein uL18.